A 99-amino-acid polypeptide reads, in one-letter code: Class II hydrophobin 1 (99 aa).

A signal peptide spans 1 to 26; that stretch reads MKFIAVVAALTASLAMAAPTESSTDT. Cystine bridges form between cysteine 31/cysteine 80, cysteine 41/cysteine 71, cysteine 42/cysteine 54, and cysteine 81/cysteine 92.

This sequence belongs to the cerato-ulmin hydrophobin family. In terms of assembly, homotetramer. Further self-assembles to form highly ordered films at water-air interfaces through intermolecular interactions.

It is found in the secreted. The protein localises to the cell wall. Its function is as follows. Aerial growth, conidiation, and dispersal of filamentous fungi in the environment rely upon a capability of their secreting small amphipathic proteins called hydrophobins (HPBs) with low sequence identity. Class I can self-assemble into an outermost layer of rodlet bundles on aerial cell surfaces, conferring cellular hydrophobicity that supports fungal growth, development and dispersal; whereas Class II form highly ordered films at water-air interfaces through intermolecular interactions but contribute nothing to the rodlet structure. HFB1 is a class II hydrophobin that shows antifungal activity against pathogenic and opportunistic fungi such as Cryptococcus neoformans, Nakaseomyces glabrataa, or Candida tropicalis. This Sodiomyces alkalinus (strain CBS 110278 / VKM F-3762 / F11) (Alkaliphilic filamentous fungus) protein is Class II hydrophobin 1.